A 276-amino-acid chain; its full sequence is Probable transposase for insertion sequence element IS702 (276 aa).

The DDE Tnp4 domain maps to 118–256 (MDVTESPIER…SNQYRNRHRR (139 aa)). Residues Asp119, Asp170, Asp190, and Glu234 each contribute to the a divalent metal cation site.

The protein belongs to the transposase 11 family. Requires a divalent metal cation as cofactor.

Involved in the transposition of the insertion sequence. This Microchaete diplosiphon (Fremyella diplosiphon) protein is Probable transposase for insertion sequence element IS702.